A 724-amino-acid chain; its full sequence is MVLTLLFSAYKLCRFFIMSGPRPGADRLTVPGPDRSGGTSPWWAAGGRGSREVSPGVGTEVQGALERSLPELQQALSELKQASAAQAVGAGLAEVFQLVEEAWLLPAVGREVAQGLCDAIRLDGGLDLLLRLLQAPELETRVQAARLLEQILVAENRDRVARIGLGVILNLSKEREPVELARSVAGILEHMFKHSEETCQRLVAAGGLDAVLYWCRRTDPALLRHCALALANCALHGGQTVQRCMVEKRAAEWLFPLAFSKEDELLRLHACLAVAVLATNKEVEREVEHSGTLALVEPLVASLDPGRFARCLVDASDTSQGRGPDDLQSLVLLLDSSRLEAQCIGAFYLCAEAAIKSLQGKTKVFSDIGAIQSLKRLVSYSTNGTTSTLAKRALRLLGEEVPRRILPCVASWKEAEVQTWLQQIGFSQYCENFRDQQVDGDLLLRLTDEELQTDLGMKSSITRKRFFRELTELKTFASYATCDRSNLADWLGSLDPRFRQYTYGLVSCGLDRSLLHRVSEQQLLEDCGIRLGVHRTRILSAAREMLHSPLPCTGGKPSGDTPDVFISYRRNSGSQLASLLKVHLQLHGFSVFIDVEKLEAGKFEDKLIQSVMAARNFVLVLSAGALDKCMQDHECKDWVHKEIVTALSCSKNIVPIIDGFEWPEPQALPEDMQAVLTFNGIKWSHEYQEATIEKIIRFLQGRPSQDSSAGSDTSLEGATSMGLP.

The N-terminal 27 residues, 1–27, are a transit peptide targeting the mitochondrion; sequence MVLTLLFSAYKLCRFFIMSGPRPGADR. One copy of the ARM 1 repeat lies at 60–100; the sequence is EVQGALERSLPELQQALSELKQASAAQAVGAGLAEVFQLVE. NAD(+) contacts are provided by residues Trp-103, Arg-110, 149-157, and 190-193; these read EQILVAENR and HMFK. ARM repeat units lie at residues 114–153, 155–193, 196–235, 237–280, 281–314, 315–354, and 359–402; these read QGLC…QILV, ENRD…HMFK, EETC…NCAL, GGQT…LATN, KEVE…CLVD, ASDT…AEAA, and QGKT…EEVP. 2 SAM domains span residues 412-476 and 486-548; these read WKEA…LKTF and NLAD…MLHS. 2 positions are modified to phosphoserine: Ser-548 and Ser-558. One can recognise a TIR domain in the interval 560 to 703; the sequence is DTPDVFISYR…KIIRFLQGRP (144 aa). NAD(+) is bound by residues 569 to 570 and Glu-599; that span reads RR. Glu-642 is a catalytic residue. The segment covering 703-717 has biased composition (polar residues); sequence PSQDSSAGSDTSLEG. The disordered stretch occupies residues 703–724; it reads PSQDSSAGSDTSLEGATSMGLP.

The protein belongs to the SARM1 family. Homooctamer; forms an octameric ring via SAM domains. Interacts with TICAM1/TRIF and thereby interferes with TICAM1/TRIF function. Interacts with MAPK10/JNK3 and SDC2 (via cytoplasmic domain). Post-translationally, phosphorylation at Ser-548 by JNK kinases (MAPK8, MAPK9 and /or MAPK10) enhance the NAD(+) hydrolase (NADase) activity. Phosphorylation at Ser-548 and subsequent activation takes place in response to oxidative stress conditions and inhibits mitochondrial respiration. Phosphorylation at Ser-548 increases in response to cerebral ischemia/reperfusion (I/R) injury.

The protein localises to the cytoplasm. The protein resides in the cell projection. It localises to the axon. Its subcellular location is the dendrite. It is found in the synapse. The protein localises to the mitochondrion. The enzyme catalyses NAD(+) + H2O = ADP-D-ribose + nicotinamide + H(+). The catalysed reaction is NAD(+) = cyclic ADP-beta-D-ribose + nicotinamide + H(+). It catalyses the reaction NADP(+) + H2O = ADP-D-ribose 2'-phosphate + nicotinamide + H(+). Autoinhibited: in the inactive state, the enzymatic TIR domain is held apart by the autoinhibiting ARM repeats. NAD(+)-binding to ARM repeats maintains an inactive state by promoting interaction between ARM repeats and the TIR domain, thereby facilitating inhibition of the enzymatic TIR domain. Following activation, possibly by nicotinamide mononucleotide (NMN), auto-inhibitory interactions are released, allowing self-association of the TIR domains and subsequent activation of the NAD(+) hydrolase (NADase) activity. Self-association of TIR domains is facilitated by the octamer of SAM domains. In terms of biological role, NAD(+) hydrolase, which plays a key role in axonal degeneration following injury by regulating NAD(+) metabolism. Acts as a negative regulator of MYD88- and TRIF-dependent toll-like receptor signaling pathway by promoting Wallerian degeneration, an injury-induced form of programmed subcellular death which involves degeneration of an axon distal to the injury site. Wallerian degeneration is triggered by NAD(+) depletion: in response to injury, SARM1 is activated and catalyzes cleavage of NAD(+) into ADP-D-ribose (ADPR), cyclic ADPR (cADPR) and nicotinamide; NAD(+) cleavage promoting cytoskeletal degradation and axon destruction. Also able to hydrolyze NADP(+), but not other NAD(+)-related molecules. Can activate neuronal cell death in response to stress. Regulates dendritic arborization through the MAPK4-JNK pathway. Involved in innate immune response: inhibits both TICAM1/TRIF- and MYD88-dependent activation of JUN/AP-1, TRIF-dependent activation of NF-kappa-B and IRF3, and the phosphorylation of MAPK14/p38. In Rattus norvegicus (Rat), this protein is NAD(+) hydrolase SARM1.